We begin with the raw amino-acid sequence, 854 residues long: Leucine--tRNA ligase (854 aa).

The segment at 1–32 (MARRDMAAETMDPRASTEPSPNEPREPARYDH) is disordered. Residues 23–32 (EPREPARYDH) show a composition bias toward basic and acidic residues. Positions 69 to 80 (PYPSGSGLHVGH) match the 'HIGH' region motif. The 'KMSKS' region motif lies at 633–637 (KMSKS). Lys636 serves as a coordination point for ATP.

The protein belongs to the class-I aminoacyl-tRNA synthetase family.

Its subcellular location is the cytoplasm. The enzyme catalyses tRNA(Leu) + L-leucine + ATP = L-leucyl-tRNA(Leu) + AMP + diphosphate. This chain is Leucine--tRNA ligase, found in Sorangium cellulosum (strain So ce56) (Polyangium cellulosum (strain So ce56)).